The primary structure comprises 600 residues: MSDVREFIRAASGGESKATVAVCGGRLVNVVSEEIYQADVAIYRDRIIAVGDISEYIGPQTEIIDAADRYLTPGMIDGHLHVECSKLSLTSFAKAVLPLGTTSIVSGLDQIIVVGGPDAAREFLDEVRQTPLKVFWGAPCKTPYTMPRSTVGHYFSPKDHRDTHHWPECVGIWETVREFIQEEDEDVLQAIEIGQANRLPVLGCCPMTRGARLNGYMQSGVRADHESYTPEEMLEKLRAGMHVVVRESSISHFLSDNLRIVTEMGVKALRRISFCTDDVVASDILSRGHLDNMVRMAMAMGISPMAAIQMATINGAEALRIDHKVGSISPGRTADILIVNDLRDFRIEAVVANGTVAARDGRMVVKLVPPQRSAGLLRSVKTTPVTAADIAVPFTGTTPFAEVLAIAVTPEKVFVRTRRDVRLPVVDGKILADASQNVQYVTVVERYGKTLNRPVAFVSGFNLKSGAIASSTAPDDNNIICIGADPQDMAIAINHLVANNGGQVVVDKGEVVEFLHLPIGGIVSDIDPAEMAAFELRLDEAARRLGCDLPWPFMYMFVLQITAIPDYAMTDLGVVDCVNLRIISPLAPDGPAKANTLAAE.

It belongs to the metallo-dependent hydrolases superfamily. Adenine deaminase family. Requires Mn(2+) as cofactor.

The enzyme catalyses adenine + H2O + H(+) = hypoxanthine + NH4(+). The protein is Adenine deaminase 4 of Rhizobium meliloti (strain 1021) (Ensifer meliloti).